A 619-amino-acid polypeptide reads, in one-letter code: DNA mismatch repair protein MutL (619 aa).

It belongs to the DNA mismatch repair MutL/HexB family.

Its function is as follows. This protein is involved in the repair of mismatches in DNA. It is required for dam-dependent methyl-directed DNA mismatch repair. May act as a 'molecular matchmaker', a protein that promotes the formation of a stable complex between two or more DNA-binding proteins in an ATP-dependent manner without itself being part of a final effector complex. The sequence is that of DNA mismatch repair protein MutL from Xylella fastidiosa (strain 9a5c).